A 364-amino-acid polypeptide reads, in one-letter code: 1-aminocyclopropane-1-carboxylate oxidase homolog 11 (364 aa).

The region spanning 213-312 is the Fe2OG dioxygenase domain; that stretch reads KSLLMICHYY…RISVASFFSS (100 aa). Fe cation contacts are provided by H237, D239, and H293. R303 lines the 2-oxoglutarate pocket.

The protein belongs to the iron/ascorbate-dependent oxidoreductase family. Fe(2+) serves as cofactor.

The polypeptide is 1-aminocyclopropane-1-carboxylate oxidase homolog 11 (Arabidopsis thaliana (Mouse-ear cress)).